A 185-amino-acid chain; its full sequence is Elongation factor P (185 aa).

Belongs to the elongation factor P family.

Its subcellular location is the cytoplasm. Its pathway is protein biosynthesis; polypeptide chain elongation. Its function is as follows. Involved in peptide bond synthesis. Stimulates efficient translation and peptide-bond synthesis on native or reconstituted 70S ribosomes in vitro. Probably functions indirectly by altering the affinity of the ribosome for aminoacyl-tRNA, thus increasing their reactivity as acceptors for peptidyl transferase. The sequence is that of Elongation factor P from Paraburkholderia xenovorans (strain LB400).